We begin with the raw amino-acid sequence, 2080 residues long: Fatty acid synthase beta subunit TOXC (2080 aa).

Residues 170-397 (GRYFDELREL…LYRFNLLLRK (228 aa)) enclose the Starter acyltransferase (SAT) domain. Catalysis depends on Ser-276, which acts as the For acetyltransferase activity. The enoyl reductase (ER) domain stretch occupies residues 585–830 (SRLLGLPPIM…VIVETEGLND (246 aa)). The dehydratase (DH) domain stretch occupies residues 1155–1644 (GKSRSWRHAI…LPNQKLEVKL (490 aa)). The 119-residue stretch at 1544–1662 (SVDFEDPVSV…MIRLHIEARA (119 aa)) folds into the MaoC-like domain. The Malonyl-CoA:ACP transacylase (MAT) domain occupies 1682–2046 (TYVFTGQGSQ…FQYVYDLTGS (365 aa)). The malonyl/palmitoyl transferase (MT/PT) domain stretch occupies residues 1683–2046 (YVFTGQGSQE…FQYVYDLTGS (364 aa)). The active-site For malonyltransferase activity is Ser-1828.

This sequence belongs to the fungal fatty acid synthetase subunit beta family.

The enzyme catalyses acetyl-CoA + n malonyl-CoA + 2n NADPH + 4n H(+) = a long-chain-acyl-CoA + n CoA + n CO2 + 2n NADP(+).. The catalysed reaction is holo-[ACP] + acetyl-CoA = acetyl-[ACP] + CoA. It carries out the reaction holo-[ACP] + malonyl-CoA = malonyl-[ACP] + CoA. It catalyses the reaction a (3R)-hydroxyacyl-[ACP] = a (2E)-enoyl-[ACP] + H2O. The enzyme catalyses a 2,3-saturated acyl-[ACP] + NAD(+) = a (2E)-enoyl-[ACP] + NADH + H(+). The catalysed reaction is (9Z)-octadecenoyl-[ACP] + H2O = (9Z)-octadecenoate + holo-[ACP] + H(+). It functions in the pathway mycotoxin biosynthesis; HC-toxin biosynthesis. Fatty acid synthase beta subunit, part of the diffuse TOX2 gene cluster that mediates the biosynthesis of the HC-toxin, cyclic tetrapeptide of structure cyclo(D-Pro-L-Ala-D-Ala-L-Aeo), where Aeo stands for 2-amino-9,10-epoxi-8-oxodecanoic acid. HC-toxin is a determinant of specificity and virulence in the interaction between the producing fungus and its host, maize. TOXC contribute to the synthesis of the decanoic backbone of 2-amino-9,10-epoxi-8-oxodecanoic acid, an essential precursor for the production of the major forms of HC-toxin by the non-ribosomal peptide synthetase HTS1. In Cochliobolus carbonum (Maize leaf spot fungus), this protein is Fatty acid synthase beta subunit TOXC.